Reading from the N-terminus, the 604-residue chain is Deuterosome assembly protein 1 (604 aa).

Coiled-coil stretches lie at residues 14 to 59, 85 to 197, 226 to 278, and 336 to 399; these read CEAE…NAQT, MTQN…GKKQ, IIEK…ELQS, and QDQP…KQLK. At Ser547 the chain carries Phosphoserine. Residues 558 to 601 are a coiled coil; it reads AAQHFLLEEEKRAKELEKLLNTHIDELQRHTEFTLNKYSKLKQN.

This sequence belongs to the CEP63 family. Interacts with CEP152; the interaction is mutually exclusive with CEP63.

The protein resides in the cytoplasm. Functionally, key structural component of the deuterosome, a structure that promotes de novo centriole amplification in multiciliated cells. Deuterosome-mediated centriole amplification occurs in terminally differentiated multiciliated cells and can generate more than 100 centrioles. Probably sufficient for the specification and formation of the deuterosome inner core. Interacts with CEP152 and recruits PLK4 to activate centriole biogenesis. This chain is Deuterosome assembly protein 1, found in Homo sapiens (Human).